A 532-amino-acid polypeptide reads, in one-letter code: Flavin-containing monooxygenase 1 (532 aa).

A2 is subject to N-acetylalanine. Residues 2–510 lie on the Lumenal side of the membrane; that stretch reads AKRVAIVGAG…TRIVKESPSP (509 aa). FAD-binding positions include 9-13, E32, 40-41, and 61-62; these read GAGVS, LW, and NS. Residue 60-61 participates in NADP(+) binding; the sequence is SN. N120 carries an N-linked (GlcNAc...) (high mannose) asparagine glycan. NADP(+) is bound at residue 195-198; that stretch reads SGTD. A helical transmembrane segment spans residues 511 to 531; that stretch reads FASLLKLFSFLALLVAIFQIF. Residue L532 is a topological domain, cytoplasmic.

It belongs to the FMO family. The cofactor is FAD. As to expression, liver.

It is found in the endoplasmic reticulum membrane. It carries out the reaction hypotaurine + NADPH + O2 + H(+) = taurine + NADP(+) + H2O. The enzyme catalyses hypotaurine + NADH + O2 + H(+) = taurine + NAD(+) + H2O. The catalysed reaction is trimethylamine + NADPH + O2 = trimethylamine N-oxide + NADP(+) + H2O. It catalyses the reaction N,N-dimethylaniline + NADPH + O2 + H(+) = N,N-dimethylaniline N-oxide + NADP(+) + H2O. In terms of biological role, broad spectrum monooxygenase that catalyzes the oxygenation of a wide variety of nitrogen- and sulfur-containing compounds including xenobiotics. Catalyzes the S-oxygenation of hypotaurine to produce taurine, an organic osmolyte involved in cell volume regulation as well as a variety of cytoprotective and developmental processes. In vitro, catalyzes the N-oxygenation of trimethylamine (TMA) to produce trimethylamine N-oxide (TMAO) and could therefore participate to the detoxification of this compound that is generated by the action of gut microbiota from dietary precursors such as choline, choline containing compounds, betaine or L-carnitine. The sequence is that of Flavin-containing monooxygenase 1 (FMO1) from Sus scrofa (Pig).